The primary structure comprises 445 residues: FAS-associated factor 2 (445 aa).

Position 2 is an N-acetylalanine (Ala-2). The region spanning 12-48 is the UBA domain; sequence EQTEKLLQFQDLTGIESMDQCRHTLEQHNWNIEAAVQ. An N6-acetyllysine modification is found at Lys-167. Positions 275–350 form a coiled coil; it reads SERLEREERN…EEKERKLECL (76 aa). The tract at residues 299–361 is disordered; it reads ASLRADQEKE…PEPSPDDPES (63 aa). The span at 303–348 shows a compositional bias: basic and acidic residues; that stretch reads ADQEKERKKREERERKRRKEEEVQQQKLAEERRRQNLQEEKERKLE. The region spanning 357 to 439 is the UBX domain; it reads DDPESVKIIF…GLSHTEVLFV (83 aa).

As to quaternary structure, identified in a complex that contains SEL1L, OS9, FAF2/UBXD8, UBE2J1/UBC6E and AUP1. Interacts with YOD1. Interacts (via N-terminus) with UBQLN2 (via C-terminus). Interacts with PNPLA2 and UBAC2. Interacts with ZFAND2B; probably through VCP. Interacts with LMBR1L. Broadly expressed, with highest levels in brain.

It localises to the cytoplasm. It is found in the lipid droplet. The protein resides in the endoplasmic reticulum. Its function is as follows. Plays an important role in endoplasmic reticulum-associated degradation (ERAD) that mediates ubiquitin-dependent degradation of misfolded endoplasmic reticulum proteins. By controlling the steady-state expression of the IGF1R receptor, indirectly regulates the insulin-like growth factor receptor signaling pathway. Involved in inhibition of lipid droplet degradation by binding to phospholipase PNPL2 and inhibiting its activity by promoting dissociation of PNPL2 from its endogenous activator, ABHD5 which inhibits the rate of triacylglycerol hydrolysis. Involved in stress granule disassembly: associates with ubiquitinated G3BP1 in response to heat shock, thereby promoting interaction between ubiquitinated G3BP1 and VCP, followed by G3BP1 extraction from stress granules and stress granule disassembly. The chain is FAS-associated factor 2 from Homo sapiens (Human).